The chain runs to 88 residues: Small ribosomal subunit protein uS15 (88 aa).

The protein belongs to the universal ribosomal protein uS15 family. As to quaternary structure, part of the 30S ribosomal subunit. Forms a bridge to the 50S subunit in the 70S ribosome, contacting the 23S rRNA.

Its function is as follows. One of the primary rRNA binding proteins, it binds directly to 16S rRNA where it helps nucleate assembly of the platform of the 30S subunit by binding and bridging several RNA helices of the 16S rRNA. In terms of biological role, forms an intersubunit bridge (bridge B4) with the 23S rRNA of the 50S subunit in the ribosome. This chain is Small ribosomal subunit protein uS15, found in Acidobacterium capsulatum (strain ATCC 51196 / DSM 11244 / BCRC 80197 / JCM 7670 / NBRC 15755 / NCIMB 13165 / 161).